The chain runs to 867 residues: Glutamate receptor 1.2 (867 aa).

Residues M1–A27 form the signal peptide. Residues S28 to T560 are Extracellular-facing. Residues N301, N400, N496, and N499 are each glycosylated (N-linked (GlcNAc...) asparagine). Residues P561–I581 form a helical membrane-spanning segment. Topologically, residues E582–Q590 are cytoplasmic. The chain crosses the membrane as a helical span at residues G591–A611. The Cytoplasmic segment spans residues H612–R622. The helical transmembrane segment at F623–L643 threads the bilayer. At T644 to G792 the chain is on the extracellular side. 4 N-linked (GlcNAc...) asparagine glycosylation sites follow: N676, N688, N699, and N748. Residues L793 to L813 traverse the membrane as a helical segment. At R814–R867 the chain is on the cytoplasmic side.

It belongs to the glutamate-gated ion channel (TC 1.A.10.1) family. As to quaternary structure, may form heteromers. As to expression, expressed predominantly in roots and siliques.

The protein localises to the membrane. Glutamate-gated receptor that probably acts as a non-selective cation channel. May be involved in light-signal transduction and calcium homeostasis via the regulation of calcium influx into cells. This chain is Glutamate receptor 1.2 (GLR1.2), found in Arabidopsis thaliana (Mouse-ear cress).